We begin with the raw amino-acid sequence, 213 residues long: Pyrrolidone-carboxylate peptidase (213 aa).

Active-site residues include Glu78, Cys141, and His165.

This sequence belongs to the peptidase C15 family. As to quaternary structure, homotetramer.

It is found in the cytoplasm. It catalyses the reaction Release of an N-terminal pyroglutamyl group from a polypeptide, the second amino acid generally not being Pro.. Its function is as follows. Removes 5-oxoproline from various penultimate amino acid residues except L-proline. This Staphylococcus saprophyticus subsp. saprophyticus (strain ATCC 15305 / DSM 20229 / NCIMB 8711 / NCTC 7292 / S-41) protein is Pyrrolidone-carboxylate peptidase.